We begin with the raw amino-acid sequence, 102 residues long: Aspartyl/glutamyl-tRNA(Asn/Gln) amidotransferase subunit C (102 aa).

Belongs to the GatC family. In terms of assembly, heterotrimer of A, B and C subunits.

It catalyses the reaction L-glutamyl-tRNA(Gln) + L-glutamine + ATP + H2O = L-glutaminyl-tRNA(Gln) + L-glutamate + ADP + phosphate + H(+). The enzyme catalyses L-aspartyl-tRNA(Asn) + L-glutamine + ATP + H2O = L-asparaginyl-tRNA(Asn) + L-glutamate + ADP + phosphate + 2 H(+). Functionally, allows the formation of correctly charged Asn-tRNA(Asn) or Gln-tRNA(Gln) through the transamidation of misacylated Asp-tRNA(Asn) or Glu-tRNA(Gln) in organisms which lack either or both of asparaginyl-tRNA or glutaminyl-tRNA synthetases. The reaction takes place in the presence of glutamine and ATP through an activated phospho-Asp-tRNA(Asn) or phospho-Glu-tRNA(Gln). The sequence is that of Aspartyl/glutamyl-tRNA(Asn/Gln) amidotransferase subunit C from Bordetella bronchiseptica (strain ATCC BAA-588 / NCTC 13252 / RB50) (Alcaligenes bronchisepticus).